Consider the following 509-residue polypeptide: DNA primase large subunit (509 aa).

The interval 253 to 270 is interdomain linker; the sequence is LSHSYTGQDYSTQGNVGK. Positions 266 to 509 are interacts with PRIM1; the sequence is GNVGKISLDQ…GLEDYFSEDS (244 aa). [4Fe-4S] cluster contacts are provided by C287, C367, C384, and C424. The RNA:DNA duplex-binding stretch occupies residues 300 to 442; that stretch reads HLRHGGRMQY…NVDDCGFSLN (143 aa). The interval 461-486 is disordered; the sequence is IKKEPIQPETPQPKPSVQKTKDASSA. T470 carries the phosphothreonine modification.

It belongs to the eukaryotic-type primase large subunit family. In terms of assembly, heterodimer of a catalytic subunit PRIM1 and a regulatory subunit PRIM2, also known as the DNA primase complex. Interacts via (C-terminus) with PRIM1. Component of the alpha DNA polymerase complex (also known as the alpha DNA polymerase-primase complex) consisting of four subunits: the catalytic subunit POLA1, the regulatory subunit POLA2, and the primase complex subunits PRIM1 and PRIM2 respectively. Within the complex, POLA1 directly interacts with PRIM2. [4Fe-4S] cluster serves as cofactor.

In terms of biological role, regulatory subunit of the DNA primase complex and component of the DNA polymerase alpha complex (also known as the alpha DNA polymerase-primase complex) which play an essential role in the initiation of DNA synthesis. During the S phase of the cell cycle, the DNA polymerase alpha complex (composed of a catalytic subunit POLA1, an accessory subunit POLA2 and two primase subunits, the catalytic subunit PRIM1 and the regulatory subunit PRIM2) is recruited to DNA at the replicative forks via direct interactions with MCM10 and WDHD1. The primase subunit of the polymerase alpha complex initiates DNA synthesis by oligomerising short RNA primers on both leading and lagging strands. These primers are initially extended by the polymerase alpha catalytic subunit and subsequently transferred to polymerase delta and polymerase epsilon for processive synthesis on the lagging and leading strand, respectively. In the primase complex, both subunits are necessary for the initial di-nucleotide formation, but the extension of the primer depends only on the catalytic subunit. Binds RNA:DNA duplex and coordinates the catalytic activities of PRIM1 and POLA2 during primase-to-polymerase switch. In Homo sapiens (Human), this protein is DNA primase large subunit (PRIM2).